Consider the following 921-residue polypeptide: Probable TonB-dependent receptor NMB1497 (921 aa).

The N-terminal stretch at 1-25 (MRSSFRLKPICFYLMGVTLYHYSYA) is a signal peptide. The 122-residue stretch at 53-174 (DKKVFTDARA…LAGSANLRTL (122 aa)) folds into the TBDR plug domain. The TBDR beta-barrel domain occupies 185–921 (TYGLLLKGLT…TFLMTMSYKF (737 aa)). The TonB C-terminal box signature appears at 904–921 (LTNFARGRTFLMTMSYKF).

The protein belongs to the TonB-dependent receptor family.

Its subcellular location is the cell outer membrane. Functionally, probable receptor, TonB-dependent. The polypeptide is Probable TonB-dependent receptor NMB1497 (Neisseria meningitidis serogroup B (strain ATCC BAA-335 / MC58)).